The following is a 220-amino-acid chain: Fructose-6-phosphate aldolase (220 aa).

Lysine 85 serves as the catalytic Schiff-base intermediate with substrate.

Belongs to the transaldolase family. Type 3A subfamily. In terms of assembly, homodecamer.

It localises to the cytoplasm. The catalysed reaction is beta-D-fructose 6-phosphate = dihydroxyacetone + D-glyceraldehyde 3-phosphate. Its function is as follows. Catalyzes the reversible formation of fructose 6-phosphate from dihydroxyacetone and D-glyceraldehyde 3-phosphate via an aldolization reaction. The polypeptide is Fructose-6-phosphate aldolase (Salmonella arizonae (strain ATCC BAA-731 / CDC346-86 / RSK2980)).